A 384-amino-acid chain; its full sequence is BTB and MATH domain-containing protein 34 (384 aa).

Residues 41–127 adopt a coiled-coil conformation; that stretch reads LNGNTTLKRI…ELKFQKEQLK (87 aa). The MATH domain maps to 167 to 277; the sequence is EFSHTFNSVA…VFNFGEYEEI (111 aa). The BTB domain maps to 317-380; sequence SDAVMIVKDE…LYGEPALTGR (64 aa).

The chain is BTB and MATH domain-containing protein 34 (bath-34) from Caenorhabditis elegans.